The primary structure comprises 162 residues: MSSLRLLASAARRATTHVAYTRRGYAEISDKLKLSLALPHKAIFSSQDVVQVNIPAESGDMGILSSHVPSIEPLRPGVVEVVEDSGSQKWFVSGGFATVHPNNRLTINVVEAAPLEDFSIEAIRANLQEANKVAAGSGSEADKMEAQIEAEVYEALQHALAK.

A mitochondrion-targeting transit peptide spans 1-25; it reads MSSLRLLASAARRATTHVAYTRRGY.

Belongs to the ATPase epsilon chain family. In terms of assembly, F-type ATPases have 2 components, CF(1) - the catalytic core - and CF(0) - the membrane proton channel. CF(1) has five subunits: alpha(3), beta(3), gamma(1), delta(1), epsilon(1). CF(0) has three main subunits: a, b and c.

It localises to the mitochondrion. It is found in the mitochondrion inner membrane. Functionally, mitochondrial membrane ATP synthase (F(1)F(0) ATP synthase or Complex V) produces ATP from ADP in the presence of a proton gradient across the membrane which is generated by electron transport complexes of the respiratory chain. F-type ATPases consist of two structural domains, F(1) - containing the extramembraneous catalytic core, and F(0) - containing the membrane proton channel, linked together by a central stalk and a peripheral stalk. During catalysis, ATP turnover in the catalytic domain of F(1) is coupled via a rotary mechanism of the central stalk subunits to proton translocation. Part of the complex F(1) domain and of the central stalk which is part of the complex rotary element. Rotation of the central stalk against the surrounding alpha(3)beta(3) subunits leads to hydrolysis of ATP in three separate catalytic sites on the beta subunits. In Agaricus bisporus (White button mushroom), this protein is ATP synthase subunit delta, mitochondrial (atpD).